A 508-amino-acid chain; its full sequence is Small ribosomal subunit protein mS47 (508 aa).

The protein belongs to the enoyl-CoA hydratase/isomerase family. Mitochondrion-specific ribosomal protein mS47 subfamily. As to quaternary structure, component of the mitochondrial small ribosomal subunit (mt-SSU). Mature N.crassa 74S mitochondrial ribosomes consist of a small (37S) and a large (54S) subunit. The 37S small subunit contains a 16S ribosomal RNA (16S mt-rRNA) and 32 different proteins. The 54S large subunit contains a 23S rRNA (23S mt-rRNA) and 42 different proteins. mS47 forms a protuberance of the N.crassa mitoribosome and retains a solvent-exposed cavity liekly capable of accommodating a substrate, in accordance with it being an active enzyme as well as an integral constituent of the mitoribosome.

It is found in the mitochondrion. It catalyses the reaction 3-hydroxy-2-methylpropanoyl-CoA + H2O = 3-hydroxy-2-methylpropanoate + CoA + H(+). In terms of biological role, component of the mitochondrial ribosome (mitoribosome), a dedicated translation machinery responsible for the synthesis of mitochondrial genome-encoded proteins, including at least some of the essential transmembrane subunits of the mitochondrial respiratory chain. The mitoribosomes are attached to the mitochondrial inner membrane and translation products are cotranslationally integrated into the membrane. mS47 has enzymatic activity in vitro, and is able to catalyze the specific hydrolysis of 3-hydroxyisobutyryl-CoA (HIBYL-CoA). However, because the turnover rate of mS47 is only a fraction of that of the homologous mammalian enzyme, the physiological function of this activity remains unclear. This is Small ribosomal subunit protein mS47 (ehd3) from Neurospora crassa (strain ATCC 24698 / 74-OR23-1A / CBS 708.71 / DSM 1257 / FGSC 987).